Reading from the N-terminus, the 229-residue chain is UPF0758 protein CLL_A0562 (229 aa).

An MPN domain is found at 107-229; sequence KIMSPNDLAM…FISLKEKGFI (123 aa). Zn(2+) contacts are provided by H178, H180, and D191. The short motif at 178-191 is the JAMM motif element; that stretch reads HNHPSGDPTPSKED.

It belongs to the UPF0758 family.

In Clostridium botulinum (strain Eklund 17B / Type B), this protein is UPF0758 protein CLL_A0562.